Reading from the N-terminus, the 362-residue chain is Molybdenum import ATP-binding protein ModC (362 aa).

In terms of domain architecture, ABC transporter spans 4 to 238; that stretch reads AGEAAIRARF…LDLPIRLGED (235 aa). 38–45 contributes to the ATP binding site; the sequence is GHSGSGKT. The Mop domain occupies 297–362; that stretch reads GTSILNTLPA…AQIKAVALVG (66 aa).

This sequence belongs to the ABC transporter superfamily. Molybdate importer (TC 3.A.1.8) family. The complex is composed of two ATP-binding proteins (ModC), two transmembrane proteins (ModB) and a solute-binding protein (ModA).

It localises to the cell inner membrane. The catalysed reaction is molybdate(out) + ATP + H2O = molybdate(in) + ADP + phosphate + H(+). Its function is as follows. Part of the ABC transporter complex ModABC involved in molybdenum import. Responsible for energy coupling to the transport system. This chain is Molybdenum import ATP-binding protein ModC, found in Thiobacillus denitrificans (strain ATCC 25259 / T1).